Consider the following 392-residue polypeptide: F-box only protein 5-A (392 aa).

Residues 1–21 (MMCGFASNQSPKKLSSKKSSA) are disordered. Over residues 7-20 (SNQSPKKLSSKKSS) the composition is skewed to low complexity. An F-box domain is found at 197–244 (AELFHRDFKHLLTKILRHLSAMDLINVISVSTTWRKLLQKDNWAYNAY). A ZBR-type zinc finger spans residues 319–367 (SLKVCVDCGSPAKHDPCLHRAICTRESCKLDFCTRCSCKYHFSKSCLMS). Residues cysteine 323, cysteine 326, cysteine 341, cysteine 346, cysteine 351, cysteine 354, histidine 359, and cysteine 364 each coordinate Zn(2+).

In terms of assembly, part of a SCF (SKP1-cullin-F-box) protein ligase complex. Interacts with btrc. Interacts with skp1. Interacts with cdc20. Interacts with pin1; stabilizes fbxo5 by preventing its association with btrc in an isomerization-dependent pathway; this interaction is present during G2 phase and prevents fbxo5 degradation. Interacts with plk1. Proteolysed; proteolysis is induced by both cyclin B-cdk1 and cyclin A-cdk1/2 complex through probable phosphorylation. Proteolysis is inhibited by pin1 during G2.

The protein resides in the nucleus. Its subcellular location is the cytoplasm. It is found in the cytoskeleton. It localises to the spindle. The protein localises to the microtubule organizing center. The protein resides in the centrosome. It participates in protein modification; protein ubiquitination. Its function is as follows. Regulates progression through early mitosis by inhibiting the anaphase promoting complex/cyclosome (APC). Binds to the APC activator cdc20 to prevent APC activation. Can also bind directly to the APC to inhibit substrate-binding. Required to arrest unfertilized eggs at metaphase of meiosis II, by preventing their release from metaphase of meiosis II, through inhibition of APC-dependent cyclin B destruction leading to stabilization of cyclin B-cdk1 complex activity. In Xenopus laevis (African clawed frog), this protein is F-box only protein 5-A (fbxo5-a).